The primary structure comprises 298 residues: Oxygen-dependent coproporphyrinogen-III oxidase (298 aa).

Ser-92 provides a ligand contact to substrate. A divalent metal cation is bound by residues His-96 and His-106. The active-site Proton donor is His-106. 108–110 contributes to the substrate binding site; sequence NVR. A divalent metal cation is bound by residues His-145 and His-175. An important for dimerization region spans residues 239-274; sequence YVEFNLVYDRGTLFGLQSGGRSESILMSLPPRVRWE. 257–259 contributes to the substrate binding site; the sequence is GGR.

This sequence belongs to the aerobic coproporphyrinogen-III oxidase family. Homodimer. A divalent metal cation is required as a cofactor.

The protein resides in the cytoplasm. The enzyme catalyses coproporphyrinogen III + O2 + 2 H(+) = protoporphyrinogen IX + 2 CO2 + 2 H2O. It participates in porphyrin-containing compound metabolism; protoporphyrin-IX biosynthesis; protoporphyrinogen-IX from coproporphyrinogen-III (O2 route): step 1/1. In terms of biological role, involved in the heme biosynthesis. Catalyzes the aerobic oxidative decarboxylation of propionate groups of rings A and B of coproporphyrinogen-III to yield the vinyl groups in protoporphyrinogen-IX. This chain is Oxygen-dependent coproporphyrinogen-III oxidase, found in Stenotrophomonas maltophilia (strain R551-3).